Reading from the N-terminus, the 555-residue chain is Glypican-6 (555 aa).

A signal peptide spans 1–23 (MPSWIGAVILPLLGLLLSLPAGA). Residues 348 to 357 (PALRSARSAP) show a composition bias toward low complexity. The segment at 348-376 (PALRSARSAPENFNTRFRPYNPEERPTTA) is disordered. Ser529 is lipidated: GPI-anchor amidated serine. Residues 530-555 (SAAQRGHSLLSWSLTCIVLALQRLCR) constitute a propeptide, removed in mature form.

It belongs to the glypican family.

It localises to the cell membrane. It is found in the secreted. The protein resides in the extracellular space. In terms of biological role, cell surface proteoglycan that bears heparan sulfate. Putative cell surface coreceptor for growth factors, extracellular matrix proteins, proteases and anti-proteases. Enhances migration and invasion of cancer cells through WNT5A signaling. This is Glypican-6 (GPC6) from Pongo abelii (Sumatran orangutan).